Consider the following 1172-residue polypeptide: Structural maintenance of chromosomes protein 2 (1172 aa).

32–39 (GLNGSGKS) provides a ligand contact to ATP. Coiled coils occupy residues 172–204 (RMFE…EEIE) and 258–507 (SHIA…AYME). An SMC hinge domain is found at 520-640 (SKVKGLVAQL…CDTPESAKKV (121 aa)). Residues 676 to 941 (LLQIQKLNSL…INHLEKENDW (266 aa)) adopt a coiled-coil conformation.

This sequence belongs to the SMC family. SMC2 subfamily. As to quaternary structure, forms a heterodimer with cut3/smc4. Component of the condensin complex, which contains the cut3 and cut14 heterodimer, and three non smc subunits that probably regulate the complex: cnd1, cnd2 and cnd3.

It is found in the nucleus. The protein resides in the cytoplasm. It localises to the chromosome. Its function is as follows. Central component of the condensin complex, a complex required for conversion of interphase chromatin into mitotic-like condense chromosomes. The condensin complex probably introduces positive supercoils into relaxed DNA in the presence of type I topoisomerases and converts nicked DNA into positive knotted forms in the presence of type II topoisomerases. The chain is Structural maintenance of chromosomes protein 2 (cut14) from Schizosaccharomyces pombe (strain 972 / ATCC 24843) (Fission yeast).